We begin with the raw amino-acid sequence, 199 residues long: Imidazole glycerol phosphate synthase subunit HisH (199 aa).

The Glutamine amidotransferase type-1 domain occupies 1–199 (MTVVVDYEMG…QILKNLREML (199 aa)). C79 acts as the Nucleophile in catalysis. Active-site residues include H180 and E182.

In terms of assembly, heterodimer of HisH and HisF.

The protein resides in the cytoplasm. It carries out the reaction 5-[(5-phospho-1-deoxy-D-ribulos-1-ylimino)methylamino]-1-(5-phospho-beta-D-ribosyl)imidazole-4-carboxamide + L-glutamine = D-erythro-1-(imidazol-4-yl)glycerol 3-phosphate + 5-amino-1-(5-phospho-beta-D-ribosyl)imidazole-4-carboxamide + L-glutamate + H(+). The catalysed reaction is L-glutamine + H2O = L-glutamate + NH4(+). The protein operates within amino-acid biosynthesis; L-histidine biosynthesis; L-histidine from 5-phospho-alpha-D-ribose 1-diphosphate: step 5/9. Functionally, IGPS catalyzes the conversion of PRFAR and glutamine to IGP, AICAR and glutamate. The HisH subunit catalyzes the hydrolysis of glutamine to glutamate and ammonia as part of the synthesis of IGP and AICAR. The resulting ammonia molecule is channeled to the active site of HisF. The protein is Imidazole glycerol phosphate synthase subunit HisH of Carboxydothermus hydrogenoformans (strain ATCC BAA-161 / DSM 6008 / Z-2901).